A 332-amino-acid polypeptide reads, in one-letter code: 2,3-diketo-L-gulonate reductase (332 aa).

Catalysis depends on histidine 44, which acts as the Proton donor. Residues 168–174 (ITMVDMS), 224–225 (WK), and 304–306 (GHE) contribute to the NAD(+) site.

Belongs to the LDH2/MDH2 oxidoreductase family. DlgD subfamily. Homodimer.

It localises to the cytoplasm. It carries out the reaction 3-dehydro-L-gulonate + NAD(+) = 2,3-dioxo-L-gulonate + NADH + H(+). The catalysed reaction is 3-dehydro-L-gulonate + NADP(+) = 2,3-dioxo-L-gulonate + NADPH + H(+). Its function is as follows. Catalyzes the reduction of 2,3-diketo-L-gulonate in the presence of NADH, to form 3-keto-L-gulonate. In Escherichia coli (strain K12 / MC4100 / BW2952), this protein is 2,3-diketo-L-gulonate reductase.